The primary structure comprises 261 residues: Carboxy-terminal domain RNA polymerase II polypeptide A small phosphatase 1 (261 aa).

The residue at position 1 (M1) is an N-acetylmethionine. Polar residues predominate over residues 1–10; that stretch reads MDSSAVITQI. Residues 1–33 are disordered; the sequence is MDSSAVITQISKEEARGPLRGKGDQKSAASQKP. The segment covering 11–25 has biased composition (basic and acidic residues); the sequence is SKEEARGPLRGKGDQ. Residues 86-244 form the FCP1 homology domain; it reads QDSDKICVVI…HDLLPFFEQL (159 aa). Residue D96 is the 4-aspartylphosphate intermediate of the active site. D96, D98, and N207 together coordinate Mg(2+). D98 serves as the catalytic Proton donor.

As to quaternary structure, monomer. Interacts with GTF2F1. Interacts with REST. Requires Mg(2+) as cofactor. Expression is restricted to non-neuronal tissues. Highest expression in skeletal muscle, spleen, lung and placenta.

It is found in the nucleus. It carries out the reaction O-phospho-L-seryl-[protein] + H2O = L-seryl-[protein] + phosphate. The catalysed reaction is O-phospho-L-threonyl-[protein] + H2O = L-threonyl-[protein] + phosphate. Stimulated by GTF2F1. Inhibited by beryllofluoride anions. Preferentially catalyzes the dephosphorylation of 'Ser-5' within the tandem 7 residue repeats in the C-terminal domain (CTD) of the largest RNA polymerase II subunit POLR2A. Negatively regulates RNA polymerase II transcription, possibly by controlling the transition from initiation/capping to processive transcript elongation. Recruited by REST to neuronal genes that contain RE-1 elements, leading to neuronal gene silencing in non-neuronal cells. This is Carboxy-terminal domain RNA polymerase II polypeptide A small phosphatase 1 (CTDSP1) from Homo sapiens (Human).